Consider the following 335-residue polypeptide: 4-hydroxythreonine-4-phosphate dehydrogenase (335 aa).

Substrate is bound at residue T132. H163, H208, and H263 together coordinate a divalent metal cation. Substrate-binding residues include K271, N280, and R289.

The protein belongs to the PdxA family. In terms of assembly, homodimer. Zn(2+) serves as cofactor. Mg(2+) is required as a cofactor. The cofactor is Co(2+).

It localises to the cytoplasm. The enzyme catalyses 4-(phosphooxy)-L-threonine + NAD(+) = 3-amino-2-oxopropyl phosphate + CO2 + NADH. The protein operates within cofactor biosynthesis; pyridoxine 5'-phosphate biosynthesis; pyridoxine 5'-phosphate from D-erythrose 4-phosphate: step 4/5. In terms of biological role, catalyzes the NAD(P)-dependent oxidation of 4-(phosphooxy)-L-threonine (HTP) into 2-amino-3-oxo-4-(phosphooxy)butyric acid which spontaneously decarboxylates to form 3-amino-2-oxopropyl phosphate (AHAP). The protein is 4-hydroxythreonine-4-phosphate dehydrogenase of Zymomonas mobilis subsp. mobilis (strain ATCC 31821 / ZM4 / CP4).